A 229-amino-acid polypeptide reads, in one-letter code: Large ribosomal subunit protein uL1 (229 aa).

This sequence belongs to the universal ribosomal protein uL1 family. Part of the 50S ribosomal subunit.

Its function is as follows. Binds directly to 23S rRNA. The L1 stalk is quite mobile in the ribosome, and is involved in E site tRNA release. Functionally, protein L1 is also a translational repressor protein, it controls the translation of the L11 operon by binding to its mRNA. This chain is Large ribosomal subunit protein uL1, found in Streptococcus equi subsp. zooepidemicus (strain MGCS10565).